The sequence spans 469 residues: ATP synthase subunit beta (469 aa).

Residue Gly-153–Thr-160 participates in ATP binding.

This sequence belongs to the ATPase alpha/beta chains family. In terms of assembly, F-type ATPases have 2 components, CF(1) - the catalytic core - and CF(0) - the membrane proton channel. CF(1) has five subunits: alpha(3), beta(3), gamma(1), delta(1), epsilon(1). CF(0) has three main subunits: a(1), b(2) and c(9-12). The alpha and beta chains form an alternating ring which encloses part of the gamma chain. CF(1) is attached to CF(0) by a central stalk formed by the gamma and epsilon chains, while a peripheral stalk is formed by the delta and b chains.

It localises to the cell inner membrane. The catalysed reaction is ATP + H2O + 4 H(+)(in) = ADP + phosphate + 5 H(+)(out). Produces ATP from ADP in the presence of a proton gradient across the membrane. The catalytic sites are hosted primarily by the beta subunits. This chain is ATP synthase subunit beta, found in Pseudothermotoga lettingae (strain ATCC BAA-301 / DSM 14385 / NBRC 107922 / TMO) (Thermotoga lettingae).